The sequence spans 346 residues: Holliday junction branch migration complex subunit RuvB (346 aa).

The tract at residues 1 to 182 (MKIELLTTPA…FGINSRFDYY (182 aa)) is large ATPase domain (RuvB-L). ATP is bound by residues Ile21, Arg22, Gly63, Lys66, Thr67, Thr68, 129 to 131 (EDF), Arg172, Tyr182, and Arg219. Thr67 contributes to the Mg(2+) binding site. The interval 183-253 (SPDLLEGIVM…IAMKTLECLD (71 aa)) is small ATPAse domain (RuvB-S). The head domain (RuvB-H) stretch occupies residues 256–346 (EEGLDDMDKK…GLFDADGNLS (91 aa)). DNA contacts are provided by Arg311 and Arg316.

It belongs to the RuvB family. In terms of assembly, homohexamer. Forms an RuvA(8)-RuvB(12)-Holliday junction (HJ) complex. HJ DNA is sandwiched between 2 RuvA tetramers; dsDNA enters through RuvA and exits via RuvB. An RuvB hexamer assembles on each DNA strand where it exits the tetramer. Each RuvB hexamer is contacted by two RuvA subunits (via domain III) on 2 adjacent RuvB subunits; this complex drives branch migration. In the full resolvosome a probable DNA-RuvA(4)-RuvB(12)-RuvC(2) complex forms which resolves the HJ.

Its subcellular location is the cytoplasm. The enzyme catalyses ATP + H2O = ADP + phosphate + H(+). The RuvA-RuvB-RuvC complex processes Holliday junction (HJ) DNA during genetic recombination and DNA repair, while the RuvA-RuvB complex plays an important role in the rescue of blocked DNA replication forks via replication fork reversal (RFR). RuvA specifically binds to HJ cruciform DNA, conferring on it an open structure. The RuvB hexamer acts as an ATP-dependent pump, pulling dsDNA into and through the RuvAB complex. RuvB forms 2 homohexamers on either side of HJ DNA bound by 1 or 2 RuvA tetramers; 4 subunits per hexamer contact DNA at a time. Coordinated motions by a converter formed by DNA-disengaged RuvB subunits stimulates ATP hydrolysis and nucleotide exchange. Immobilization of the converter enables RuvB to convert the ATP-contained energy into a lever motion, pulling 2 nucleotides of DNA out of the RuvA tetramer per ATP hydrolyzed, thus driving DNA branch migration. The RuvB motors rotate together with the DNA substrate, which together with the progressing nucleotide cycle form the mechanistic basis for DNA recombination by continuous HJ branch migration. Branch migration allows RuvC to scan DNA until it finds its consensus sequence, where it cleaves and resolves cruciform DNA. In Chlorobium phaeovibrioides (strain DSM 265 / 1930) (Prosthecochloris vibrioformis (strain DSM 265)), this protein is Holliday junction branch migration complex subunit RuvB.